An 852-amino-acid chain; its full sequence is Lon protease homolog 2, peroxisomal (852 aa).

An N-acetylserine modification is found at Ser2. One can recognise a Lon N-terminal domain in the interval 13 to 222 (LPLLLTHESV…MTIPLLVRQI (210 aa)). 375-382 (GPPGVGKT) contributes to the ATP binding site. The region spanning 651 to 837 (LSQPGVAIGL…DEVLNAAFDG (187 aa)) is the Lon proteolytic domain. Residues Ser743 and Lys786 contribute to the active site. A Microbody targeting signal motif is present at residues 850–852 (SKL).

Belongs to the peptidase S16 family. Interacts with PEX5. Interacts with TYSND1. May interact with enzymes involved in beta-oxidation of fatty acids, including ACOX1/AOX.

It localises to the peroxisome matrix. The catalysed reaction is Hydrolysis of proteins in presence of ATP.. Its function is as follows. ATP-dependent serine protease that mediates the selective degradation of misfolded and unassembled polypeptides in the peroxisomal matrix. Necessary for type 2 peroxisome targeting signal (PTS2)-containing protein processing and facilitates peroxisome matrix protein import. May indirectly regulate peroxisomal fatty acid beta-oxidation through degradation of the self-processed forms of TYSND1. In Mus musculus (Mouse), this protein is Lon protease homolog 2, peroxisomal (Lonp2).